Here is a 496-residue protein sequence, read N- to C-terminus: ADP-dependent glucokinase (496 aa).

The N-terminal stretch at 1–22 (MALWRGSACAGFLALAVGCVFL) is a signal peptide. Residues 52-496 (SPESRLAAAW…GLFYSEARPD (445 aa)) form the ADPK domain. Residues Glu-297, Glu-328, and Asp-481 each coordinate Mg(2+). Residue Asp-481 is the Proton acceptor of the active site.

Belongs to the ADP-dependent glucokinase family. As to quaternary structure, monomer. Mg(2+) is required as a cofactor.

Its subcellular location is the secreted. It carries out the reaction D-glucose + ADP = D-glucose 6-phosphate + AMP + H(+). The protein operates within carbohydrate degradation; glycolysis. Functionally, catalyzes the phosphorylation of D-glucose to D-glucose 6-phosphate using ADP as the phosphate donor. GDP and CDP can replace ADP, but with reduced efficiency. The protein is ADP-dependent glucokinase (Adpgk) of Mus musculus (Mouse).